The following is a 57-amino-acid chain: SEVKMDAEFRHDSGYEVHHQKLVFFAEDVGSNKGAIIGLMVGGVVIATVIVITLVML.

The Extracellular portion of the chain corresponds to 1 to 33 (SEVKMDAEFRHDSGYEVHHQKLVFFAEDVGSNK). Cu(2+)-binding residues include H11, Y15, H18, and H19. Residues H11, Y15, H18, and H19 each coordinate Zn(2+). Residues 34–57 (GAIIGLMVGGVVIATVIVITLVML) form a helical membrane-spanning segment.

Belongs to the APP family. Binds, via its C-terminus, to the PID domain of several cytoplasmic proteins, including APBB family members, the APBA family, MAPK8IP1, SHC1 and NUMB and DAB1. Binding to DAB1 inhibits its serine phosphorylation. Interacts (via NPXY motif) with DAB2 (via PID domain); the interaction is impaired by tyrosine phosphorylation of the NPXY motif. Also interacts with GPCR-like protein BPP, APPBP1, IB1, KNS2 (via its TPR domains), APPBP2 (via BaSS) and DDB1. In vitro, it binds MAPT via the MT-binding domains. Associates with microtubules in the presence of ATP and in a kinesin-dependent manner. Interacts, through a C-terminal domain, with GNAO1. Interacts with CPEB1, ANKS1B, TNFRSF21 and AGER. Interacts with ITM2B. Interacts with ITM2C. Interacts with IDE. Can form homodimers; dimerization is enhanced in the presence of Cu(2+) ions. Can form homodimers; this is promoted by heparin binding. Interacts with SORL1 (via N-terminal ectodomain); this interaction retains APP in the trans-Golgi network and reduces processing into soluble APP-alpha and amyloid-beta peptides. Interacts with PLD3. Interacts with VDAC1. Interacts with NSG1; could regulate APP processing. Amyloid-beta protein 42 interacts with FPR2. Interacts with LRRK2. Interacts (via cytoplasmic domain) with KIF5B. Interacts (via C-terminus) with APBB2/FE65L1 (via C-terminus). Interacts (via intracellular domain) with APBB3. In terms of processing, proteolytically processed under normal cellular conditions. Cleavage either by alpha-secretase, beta-secretase or theta-secretase leads to generation and extracellular release of soluble APP peptides, S-APP-alpha and S-APP-beta, and the retention of corresponding membrane-anchored C-terminal fragments, C80, C83 and C99. Subsequent processing of C80 and C83 by gamma-secretase yields P3 peptides. This is the major secretory pathway and is non-amyloidogenic. Alternatively, presenilin/nicastrin-mediated gamma-secretase processing of C99 releases the amyloid-beta proteins, amyloid-beta protein 40 and amyloid-beta protein 42, major components of amyloid plaques, and the cytotoxic C-terminal fragments, gamma-CTF(50), gamma-CTF(57) and gamma-CTF(59). PSEN1 cleavage is more efficient with C83 than with C99 as substrate (in vitro). Amyloid-beta protein 40 and Amyloid-beta protein 42 are cleaved by ACE. Many other minor amyloid-beta peptides, amyloid-beta 1-X peptides, are found in cerebral spinal fluid (CSF) including the amyloid-beta X-15 peptides, produced from the cleavage by alpha-secretase.

The protein resides in the cell membrane. It is found in the membrane. It localises to the perikaryon. Its subcellular location is the cell projection. The protein localises to the growth cone. The protein resides in the clathrin-coated pit. It is found in the early endosome. It localises to the cytoplasmic vesicle. Its subcellular location is the secreted. The protein localises to the cell surface. The protein resides in the nucleus. It is found in the cytoplasm. Functionally, functions as a cell surface receptor and performs physiological functions on the surface of neurons relevant to neurite growth, neuronal adhesion and axonogenesis. Interaction between APP molecules on neighboring cells promotes synaptogenesis. Involved in cell mobility and transcription regulation through protein-protein interactions. Can promote transcription activation through binding to APBB1-KAT5 and inhibit Notch signaling through interaction with Numb. Couples to apoptosis-inducing pathways such as those mediated by G(o) and JIP. Inhibits G(o)-alpha ATPase activity. Acts as a kinesin I membrane receptor, mediating the axonal transport of beta-secretase and presenilin 1. By acting as a kinesin I membrane receptor, plays a role in axonal anterograde transport of cargo towards synapses in axons. May be involved in copper homeostasis/oxidative stress through copper ion reduction. In vitro, copper-metallated APP induces neuronal death directly or is potentiated through Cu(2+)-mediated low-density lipoprotein oxidation. Can regulate neurite outgrowth through binding to components of the extracellular matrix such as heparin and collagen I and IV. Induces a AGER-dependent pathway that involves activation of p38 MAPK, resulting in internalization of amyloid-beta peptide and mitochondrial dysfunction in cultured cortical neurons. Provides Cu(2+) ions for GPC1 which are required for release of nitric oxide (NO) and subsequent degradation of the heparan sulfate chains on GPC1. This is Amyloid-beta precursor protein (APP) from Ursus maritimus (Polar bear).